Consider the following 144-residue polypeptide: Prefoldin subunit alpha (144 aa).

Belongs to the prefoldin alpha subunit family. Heterohexamer of two alpha and four beta subunits.

It localises to the cytoplasm. Molecular chaperone capable of stabilizing a range of proteins. Seems to fulfill an ATP-independent, HSP70-like function in archaeal de novo protein folding. This Methanococcus maripaludis (strain C5 / ATCC BAA-1333) protein is Prefoldin subunit alpha.